A 789-amino-acid polypeptide reads, in one-letter code: DNA topoisomerase 4 subunit A (789 aa).

Residues 34-499 (LPDLRDGLKP…EKQKVQDSDF (466 aa)) enclose the Topo IIA-type catalytic domain. Tyr122 functions as the O-(5'-phospho-DNA)-tyrosine intermediate in the catalytic mechanism.

Belongs to the type II topoisomerase GyrA/ParC subunit family. ParC type 2 subfamily. As to quaternary structure, heterotetramer composed of ParC and ParE.

The protein resides in the cell membrane. It carries out the reaction ATP-dependent breakage, passage and rejoining of double-stranded DNA.. In terms of biological role, topoisomerase IV is essential for chromosome segregation. It relaxes supercoiled DNA. Performs the decatenation events required during the replication of a circular DNA molecule. The sequence is that of DNA topoisomerase 4 subunit A from Mycoplasma pneumoniae (strain ATCC 29342 / M129 / Subtype 1) (Mycoplasmoides pneumoniae).